Here is a 311-residue protein sequence, read N- to C-terminus: Histidine decarboxylase proenzyme (311 aa).

Residues Asp64 and Ser82 each contribute to the substrate site. Residue Ser83 is modified to Pyruvic acid (Ser). Glu198 acts as the Proton donor in catalysis.

In terms of assembly, the proenzyme is a hexamer of identical pi chains; each pi chain monomer is cleaved to form a small (or beta) chain and a large (or alpha) chain by non-hydrolytic self-catalysis. It depends on pyruvate as a cofactor.

The catalysed reaction is L-histidine + H(+) = histamine + CO2. This chain is Histidine decarboxylase proenzyme (hdcA), found in Lactobacillus sp. (strain 30a).